A 379-amino-acid chain; its full sequence is Anomalous homeobox protein (379 aa).

The homeobox DNA-binding region spans 135 to 196 (PEGLKSRNFP…NYRRRQRALP (62 aa)). The disordered stretch occupies residues 195 to 283 (LPQHMKPAQQ…SKPLDVSGHP (89 aa)). A compositionally biased stretch (basic and acidic residues) spans 237–246 (QWSEEREEKG).

It is found in the nucleus. The polypeptide is Anomalous homeobox protein (ANHX) (Homo sapiens (Human)).